The chain runs to 515 residues: Bifunctional purine biosynthesis protein PurH (515 aa).

Positions Met-1 to Val-145 constitute an MGS-like domain.

It belongs to the PurH family.

It catalyses the reaction (6R)-10-formyltetrahydrofolate + 5-amino-1-(5-phospho-beta-D-ribosyl)imidazole-4-carboxamide = 5-formamido-1-(5-phospho-D-ribosyl)imidazole-4-carboxamide + (6S)-5,6,7,8-tetrahydrofolate. It carries out the reaction IMP + H2O = 5-formamido-1-(5-phospho-D-ribosyl)imidazole-4-carboxamide. Its pathway is purine metabolism; IMP biosynthesis via de novo pathway; 5-formamido-1-(5-phospho-D-ribosyl)imidazole-4-carboxamide from 5-amino-1-(5-phospho-D-ribosyl)imidazole-4-carboxamide (10-formyl THF route): step 1/1. The protein operates within purine metabolism; IMP biosynthesis via de novo pathway; IMP from 5-formamido-1-(5-phospho-D-ribosyl)imidazole-4-carboxamide: step 1/1. This chain is Bifunctional purine biosynthesis protein PurH, found in Streptococcus pneumoniae (strain P1031).